Here is a 119-residue protein sequence, read N- to C-terminus: Large ribosomal subunit protein bL20 (119 aa).

It belongs to the bacterial ribosomal protein bL20 family.

In terms of biological role, binds directly to 23S ribosomal RNA and is necessary for the in vitro assembly process of the 50S ribosomal subunit. It is not involved in the protein synthesizing functions of that subunit. The sequence is that of Large ribosomal subunit protein bL20 from Stenotrophomonas maltophilia (strain R551-3).